Consider the following 202-residue polypeptide: FMN-dependent NADH:quinone oxidoreductase (202 aa).

Residues S9, S15–S17, and M94–L97 each bind FMN.

This sequence belongs to the azoreductase type 1 family. As to quaternary structure, homodimer. It depends on FMN as a cofactor.

The catalysed reaction is 2 a quinone + NADH + H(+) = 2 a 1,4-benzosemiquinone + NAD(+). The enzyme catalyses N,N-dimethyl-1,4-phenylenediamine + anthranilate + 2 NAD(+) = 2-(4-dimethylaminophenyl)diazenylbenzoate + 2 NADH + 2 H(+). In terms of biological role, quinone reductase that provides resistance to thiol-specific stress caused by electrophilic quinones. Functionally, also exhibits azoreductase activity. Catalyzes the reductive cleavage of the azo bond in aromatic azo compounds to the corresponding amines. This chain is FMN-dependent NADH:quinone oxidoreductase, found in Gluconobacter oxydans (strain 621H) (Gluconobacter suboxydans).